A 187-amino-acid chain; its full sequence is Large ribosomal subunit protein uL10 (187 aa).

Belongs to the universal ribosomal protein uL10 family. As to quaternary structure, part of the ribosomal stalk of the 50S ribosomal subunit. The N-terminus interacts with L11 and the large rRNA to form the base of the stalk. The C-terminus forms an elongated spine to which L12 dimers bind in a sequential fashion forming a multimeric L10(L12)X complex.

Functionally, forms part of the ribosomal stalk, playing a central role in the interaction of the ribosome with GTP-bound translation factors. The sequence is that of Large ribosomal subunit protein uL10 from Synechococcus sp. (strain JA-2-3B'a(2-13)) (Cyanobacteria bacterium Yellowstone B-Prime).